The chain runs to 268 residues: HLA class II histocompatibility antigen, DQ beta 2 chain (268 aa).

Residues 1-32 form the signal peptide; the sequence is MSWKMALQIPGGFWAAAVTVMLVMLSTPVAEA. The interval 33–126 is beta-1; sequence RDFPKDFLVQ…ELRTTLQRQV (94 aa). Topologically, residues 33–229 are extracellular; that stretch reads RDFPKDFLVQ…RAQSESAQSK (197 aa). Cystine bridges form between C47-C110 and C148-C204. N-linked (GlcNAc...) asparagine glycosylation occurs at N51. The segment at 127-229 is beta-2; that stretch reads EPTVTISPSR…RAQSESAQSK (103 aa). Residues 128–216 enclose the Ig-like C1-type domain; that stretch reads PTVTISPSRT…EHPSLQSPIT (89 aa). Residues 230 to 250 traverse the membrane as a helical segment; the sequence is MLSGIGGFVLGLIFLGLGLII. At 251-268 the chain is on the cytoplasmic side; it reads RHRGQKGPRGPPPAGLLH.

Belongs to the MHC class II family. In terms of assembly, heterodimer of an alpha and a beta subunit; also referred as MHC class II molecule. Dimer formation with HLA-DQA2, but not with HLA-DQA1, is required for efficient exit from the endoplasmic reticulum (ER). In the ER, forms a heterononamer; 3 MHC class II molecules bind to a CD74 homotrimer (also known as invariant chain or HLA class II histocompatibility antigen gamma chain). In the endosomal/lysosomal system; CD74 undergoes sequential degradation by various proteases; leaving a small fragment termed CLIP on each MHC class II molecule. MHC class II molecule interacts with HLA_DM, and HLA_DO in B-cells, in order to release CLIP and facilitate the binding of antigenic peptides. Association with HLA-DMA also occurs in skin Langerhans cells, in post-Golgi compartments. As to expression, restricted to skin Langerhans cells (at protein level).

It is found in the cell membrane. The protein localises to the endoplasmic reticulum membrane. The protein resides in the golgi apparatus. It localises to the trans-Golgi network membrane. Its subcellular location is the endosome membrane. It is found in the lysosome membrane. Functionally, binds peptides derived from antigens that access the endocytic route of antigen presenting cells (APC) and presents them on the cell surface for recognition by the CD4 T-cells. The peptide binding cleft accommodates peptides of 10-30 residues. The peptides presented by MHC class II molecules are generated mostly by degradation of proteins that access the endocytic route, where they are processed by lysosomal proteases and other hydrolases. Exogenous antigens that have been endocytosed by the APC are thus readily available for presentation via MHC II molecules, and for this reason this antigen presentation pathway is usually referred to as exogenous. As membrane proteins on their way to degradation in lysosomes as part of their normal turn-over are also contained in the endosomal/lysosomal compartments, exogenous antigens must compete with those derived from endogenous components. Autophagy is also a source of endogenous peptides, autophagosomes constitutively fuse with MHC class II loading compartments. In addition to APCs, other cells of the gastrointestinal tract, such as epithelial cells, express MHC class II molecules and CD74 and act as APCs, which is an unusual trait of the GI tract. To produce a MHC class II molecule that presents an antigen, three MHC class II molecules (heterodimers of an alpha and a beta chain) associate with a CD74 trimer in the ER to form a heterononamer. Soon after the entry of this complex into the endosomal/lysosomal system where antigen processing occurs, CD74 undergoes a sequential degradation by various proteases, including CTSS and CTSL, leaving a small fragment termed CLIP (class-II-associated invariant chain peptide). The removal of CLIP is facilitated by HLA-DM via direct binding to the alpha-beta-CLIP complex so that CLIP is released. HLA-DM stabilizes MHC class II molecules until primary high affinity antigenic peptides are bound. The MHC II molecule bound to a peptide is then transported to the cell membrane surface. In B-cells, the interaction between HLA-DM and MHC class II molecules is regulated by HLA-DO. Primary dendritic cells (DCs) also to express HLA-DO. Lysosomal microenvironment has been implicated in the regulation of antigen loading into MHC II molecules, increased acidification produces increased proteolysis and efficient peptide loading. The polypeptide is HLA class II histocompatibility antigen, DQ beta 2 chain (HLA-DQB2) (Homo sapiens (Human)).